We begin with the raw amino-acid sequence, 235 residues long: Claudin-15 (235 aa).

A topological domain (cytoplasmic) is located at residue Met-1. Residues 2–24 (LVAVEIFGFFLTAVGLLMLGVTL) traverse the membrane as a helical segment. Residues 25–74 (AHSSWRVSTVHGNVITTNTIFENLWYSCATDSMGVHNCWEFPSMLALSGY) are Extracellular-facing. A disulfide bridge links Cys-52 with Cys-62. The helical transmembrane segment at 75–99 (IQACRALMITAILLGFLGLFLGMVG) threads the bilayer. At 100-115 (LRCTNIGGLELSRKTK) the chain is on the cytoplasmic side. A Phosphoserine modification is found at Ser-111. The helical transmembrane segment at 116–140 (LAATAGALHILAGICGMVAVSWYAF) threads the bilayer. Over 141–159 (NITRDFFNPLYAGTKYELG) the chain is Extracellular. The tract at residues 146–147 (FF) is important for the formation of tight-junction strand-like structures. Residues 160-182 (PALYLGWSACLLAILGGICLFSN) traverse the membrane as a helical segment. Residues 183–235 (CCCSRDRDPATGVQLPYKAPVIPAASLAARLPAAASDEEGDSSFGKYGKNAYV) lie on the Cytoplasmic side of the membrane. A phosphoserine mark is found at Ser-218 and Ser-225.

This sequence belongs to the claudin family. Can form homo- and heteropolymeric tight junction strands. Palmitoylated.

Its subcellular location is the cell junction. It is found in the tight junction. It localises to the cell membrane. The catalysed reaction is Na(+)(in) = Na(+)(out). The enzyme catalyses K(+)(in) = K(+)(out). It catalyses the reaction Cs(+)(in) = Cs(+)(out). It carries out the reaction Rb(+)(in) = Rb(+)(out). The catalysed reaction is Li(+)(in) = Li(+)(out). The enzyme catalyses NH4(+)(in) = NH4(+)(out). It catalyses the reaction methylamine(out) = methylamine(in). It carries out the reaction H2O(in) = H2O(out). Forms paracellular channels: polymerizes in tight junction strands with cation- and water-selective channels through the strands, conveying epithelial permeability in a process known as paracellular tight junction permeability. In intestinal epithelium, allows for sodium and water fluxes from the peritoneal side to the lumen of the intestine to regulate nutrient absorption and intestinal morphogenesis. This chain is Claudin-15 (CLDN15), found in Bos taurus (Bovine).